The following is a 1053-amino-acid chain: Probable dihydropyrimidine dehydrogenase [NADP(+)] (1053 aa).

Residues 84–115 (ERGALKEAMRCLKCADAPCQKSCPTQLDIKSF) enclose the 4Fe-4S ferredoxin-type 1 domain. Cysteine 94, cysteine 97, cysteine 102, cysteine 106, cysteine 145, cysteine 151, cysteine 155, and glutamine 171 together coordinate [4Fe-4S] cluster. FAD is bound by residues 207–211 (GCGPA), 231–239 (EKRAYIGGL), arginine 248, and leucine 274. NADP(+)-binding positions include 354 to 357 (AGDT), 378 to 379 (RK), arginine 385, 451 to 453 (AFG), and 495 to 501 (DVAGVAE). Residue 494-503 (GDVAGVAETT) participates in FAD binding. FMN contacts are provided by residues serine 574 and 598-599 (KT). Substrate contacts are provided by residues asparagine 633 and 692–694 (NLS). The Proton acceptor role is filled by cysteine 695. Lysine 733 is a binding site for FMN. 760-761 (NT) is a binding site for substrate. Residues glycine 791, 817 to 819 (TGG), and 840 to 841 (CS) contribute to the FMN site. 2 consecutive 4Fe-4S ferredoxin-type domains span residues 949 to 981 (EVAIIDHDMCINCGKCYMTCNDSGYQAITFDAV) and 983 to 1013 (HQPHVTEDDCTGCTLCYSVCPIPECIQMVPR). [4Fe-4S] cluster is bound by residues cysteine 958, cysteine 961, cysteine 964, cysteine 968, cysteine 992, cysteine 995, cysteine 998, and cysteine 1002.

This sequence belongs to the dihydropyrimidine dehydrogenase family. [4Fe-4S] cluster serves as cofactor. The cofactor is FAD. FMN is required as a cofactor.

It carries out the reaction 5,6-dihydrouracil + NADP(+) = uracil + NADPH + H(+). It participates in amino-acid biosynthesis; beta-alanine biosynthesis. Functionally, involved in pyrimidine base degradation. Catalyzes the reduction of uracil and thymine. Also involved the degradation of the chemotherapeutic drug 5-fluorouracil. This chain is Probable dihydropyrimidine dehydrogenase [NADP(+)], found in Caenorhabditis briggsae.